The following is a 253-amino-acid chain: Pre-mRNA-splicing factor SPF27 homolog (253 aa).

Residues 124–235 (KQYLQKNQRS…IDSFKKEAAE (112 aa)) adopt a coiled-coil conformation.

The protein belongs to the SPF27 family. Component of the multiprotein assembly MOS4-associated complex (MAC) at least composed of MOS4, CDC5 and PRL1. Interacts with CYCL1-1 and CDC5. Associated with the spliceosome. Interacts with ENY2.

Its subcellular location is the nucleus. Component of the MAC complex that probably regulates defense responses through transcriptional control and thereby is essential for plant innate immunity. Involved in mRNA splicing. This is Pre-mRNA-splicing factor SPF27 homolog (MOS4) from Arabidopsis thaliana (Mouse-ear cress).